Here is a 523-residue protein sequence, read N- to C-terminus: Nuclear receptor ROR-alpha (523 aa).

Over residues 1 to 26 (MESAPAAPDPAASEPGSSGSEAAAGS) the composition is skewed to low complexity. The tract at residues 1-63 (MESAPAAPDP…SRGISVTKKT (63 aa)) is disordered. K38 bears the N6-methyllysine mark. 2 consecutive NR C4-type zinc fingers follow at residues 73 to 93 (CKICGDKSSGIHYGVITCEGC) and 109 to 133 (CPRQKNCLIDRTSRNRCQHCRLQKC). Residues 73-138 (CKICGDKSSG…RLQKCLAVGM (66 aa)) constitute a DNA-binding region (nuclear receptor). The disordered stretch occupies residues 154–183 (DSLYAEVQKHRMQQQQRDHQQQPGEAEPLT). T183 is modified (phosphothreonine; by MAPK1). Residue K240 forms a Glycyl lysine isopeptide (Lys-Gly) (interchain with G-Cter in SUMO) linkage. The NR LBD domain maps to 272 to 510 (ELEHLAQNIS…LHFPPLYKEL (239 aa)). Positions 506-511 (LYKELF) match the AF-2 motif.

Belongs to the nuclear hormone receptor family. NR1 subfamily. As to quaternary structure, monomer. Interacts (via the DNA-binding domain) with HIF1A; the interaction enhances HIF1A transcription under hypoxia through increasing protein stability. Interacts with CEBPB; the interaction disrupts the interaction CEBPB:EP300. Interacts with the coactivators NCOA2, PPARGC1A (via LXXLL motif), EP300 and MED1. Interacts with the corepressor NCOR1. Interacts with MAGED1 and CTNNB1. Interacts with CRY1 and PER2. Interacts (via AF-2 motif) with PROX1. Interacts with NRIP1. Isoform 4 interacts (via AF-2 motif) with isoform 1 of FOXP3 (via LXXLL motif). Post-translationally, phosphorylation by conventional PKCs in neurons inhibits transcriptional activity. Phosphorylated on Thr-183 by MAPK1/ERK1 in vitro. In terms of processing, sumoylated by SENP1 and SENP2. Sumoylation, promoted by PIAS2, PIAS3, PIAS4 but not PIAS1, enhances the transcriptional activity. Desumoylated by SENP1. Ubiquitinated, leading to its degradation by the proteasome. Proteasomal degradation is required for efficient transcriptional activity and is prevented by HR. Post-translationally, monomethylated at Lys-38 by EZH2, this creates a degron recognized by a DCX (DDB1-DCAF1/VPRBP-CUL4A-RBX1) E3 ubiquitin ligase complex. Expressed in cerebellum, heart, liver, lung, kidney, retina and brown and white adipose tissues. Expressed in the subset of mature Th17 cells.

It localises to the nucleus. Its function is as follows. Nuclear receptor that binds DNA as a monomer to ROR response elements (RORE) containing a single core motif half-site 5'-AGGTCA-3' preceded by a short A-T-rich sequence. Key regulator of embryonic development, cellular differentiation, immunity, circadian rhythm as well as lipid, steroid, xenobiotics and glucose metabolism. Considered to have intrinsic transcriptional activity, have some natural ligands like oxysterols that act as agonists (25-hydroxycholesterol) or inverse agonists (7-oxygenated sterols), enhancing or repressing the transcriptional activity, respectively. Recruits distinct combinations of cofactors to target genes regulatory regions to modulate their transcriptional expression, depending on the tissue, time and promoter contexts. Regulates genes involved in photoreceptor development including OPN1SW, OPN1SM and ARR3 and skeletal muscle development with MYOD1. Required for proper cerebellum development, regulates SHH gene expression, among others, to induce granule cells proliferation as well as expression of genes involved in calcium-mediated signal transduction. Regulates the circadian expression of several clock genes, including CLOCK, BMAL1, NPAS2 and CRY1. Competes with NR1D1 for binding to their shared DNA response element on some clock genes such as BMAL1, CRY1 and NR1D1 itself, resulting in NR1D1-mediated repression or RORA-mediated activation of clock genes expression, leading to the circadian pattern of clock genes expression. Therefore influences the period length and stability of the clock. Regulates genes involved in lipid metabolism such as apolipoproteins APOA1, APOA5, APOC3 and PPARG. In liver, has specific and redundant functions with RORC as positive or negative modulator of expression of genes encoding phase I and phase II proteins involved in the metabolism of lipids, steroids and xenobiotics, such as CYP7B1 and SULT2A1. Induces a rhythmic expression of some of these genes. In addition, interplays functionally with NR1H2 and NR1H3 for the regulation of genes involved in cholesterol metabolism. Also involved in the regulation of hepatic glucose metabolism through the modulation of G6PC1 and PCK1. In adipose tissue, plays a role as negative regulator of adipocyte differentiation, probably acting through dual mechanisms. May suppress CEBPB-dependent adipogenesis through direct interaction and PPARG-dependent adipogenesis through competition for DNA-binding. Downstream of IL6 and TGFB and synergistically with RORC isoform 2, is implicated in the lineage specification of uncommitted CD4(+) T-helper (T(H)) cells into T(H)17 cells, antagonizing the T(H)1 program. Probably regulates IL17 and IL17F expression on T(H) by binding to the essential enhancer conserved non-coding sequence 2 (CNS2) in the IL17-IL17F locus. Involved in hypoxia signaling by interacting with and activating the transcriptional activity of HIF1A. May inhibit cell growth in response to cellular stress. May exert an anti-inflammatory role by inducing CHUK expression and inhibiting NF-kappa-B signaling. This chain is Nuclear receptor ROR-alpha (Rora), found in Mus musculus (Mouse).